Reading from the N-terminus, the 109-residue chain is Period circadian protein (109 aa).

2 stretches are compositionally biased toward polar residues: residues 42–56 (QSYS…NLSP) and 68–80 (SSRN…NLNM). A disordered region spans residues 42 to 109 (QSYSTPANTG…LVTLTESLLK (68 aa)). Residues 81–97 (GSVTNTSNTGTGTSSGS) are compositionally biased toward low complexity.

As to quaternary structure, forms a heterodimer with timeless (TIM); the complex then translocates into the nucleus. Post-translationally, phosphorylated with a circadian rhythmicity, probably by the double-time protein (dbt). Phosphorylation could be implicated in the stability of per monomer and in the formation of heterodimer per-tim.

The protein resides in the nucleus. The protein localises to the cytoplasm. Its subcellular location is the perinuclear region. In terms of biological role, essential for biological clock functions. Determines the period length of circadian and ultradian rhythms; an increase in PER dosage leads to shortened circadian rhythms and a decrease leads to lengthened circadian rhythms. Essential for the circadian rhythmicity of locomotor activity, eclosion behavior, and for the rhythmic component of the male courtship song that originates in the thoracic nervous system. The biological cycle depends on the rhythmic formation and nuclear localization of the TIM-PER complex. Light induces the degradation of TIM, which promotes elimination of PER. Nuclear activity of the heterodimer coordinatively regulates PER and TIM transcription through a negative feedback loop. Behaves as a negative element in circadian transcriptional loop. Does not appear to bind DNA, suggesting indirect transcriptional inhibition. This chain is Period circadian protein (per), found in Musca domestica (House fly).